The primary structure comprises 386 residues: Probable serine/threonine-protein kinase PBL23 (386 aa).

The S-palmitoyl cysteine moiety is linked to residue Cys5. Positions 82–360 (FNPDNQLGEG…SDVVTALEYL (279 aa)) constitute a Protein kinase domain. ATP contacts are provided by residues 88-96 (LGEGGFGRV) and Lys111. Asp210 functions as the Proton acceptor in the catalytic mechanism. A disordered region spans residues 365–386 (TEEDGQTVEGEEEEEEDERSKL). The segment covering 368-386 (DGQTVEGEEEEEEDERSKL) has biased composition (acidic residues).

The protein belongs to the protein kinase superfamily. Ser/Thr protein kinase family.

The protein localises to the cell membrane. The catalysed reaction is L-seryl-[protein] + ATP = O-phospho-L-seryl-[protein] + ADP + H(+). It carries out the reaction L-threonyl-[protein] + ATP = O-phospho-L-threonyl-[protein] + ADP + H(+). Functionally, may be involved in plant defense signaling. The sequence is that of Probable serine/threonine-protein kinase PBL23 from Arabidopsis thaliana (Mouse-ear cress).